The following is an 865-amino-acid chain: Alanine--tRNA ligase (865 aa).

Zn(2+) contacts are provided by His-552, His-556, Cys-654, and His-658.

The protein belongs to the class-II aminoacyl-tRNA synthetase family. Zn(2+) is required as a cofactor.

It localises to the cytoplasm. It catalyses the reaction tRNA(Ala) + L-alanine + ATP = L-alanyl-tRNA(Ala) + AMP + diphosphate. Functionally, catalyzes the attachment of alanine to tRNA(Ala) in a two-step reaction: alanine is first activated by ATP to form Ala-AMP and then transferred to the acceptor end of tRNA(Ala). Also edits incorrectly charged Ser-tRNA(Ala) and Gly-tRNA(Ala) via its editing domain. This chain is Alanine--tRNA ligase, found in Coxiella burnetii (strain Dugway 5J108-111).